The sequence spans 397 residues: S-adenosylmethionine synthase (397 aa).

Position 15 (histidine 15) interacts with ATP. Aspartate 17 lines the Mg(2+) pocket. Residue glutamate 43 participates in K(+) binding. Glutamate 56 and glutamine 99 together coordinate L-methionine. A flexible loop region spans residues 99–109; that stretch reads QSPDIAMGVNK. ATP-binding positions include 175-177, 241-242, aspartate 250, 256-257, alanine 273, and lysine 277; these read DGK, RF, and RK. Aspartate 250 serves as a coordination point for L-methionine. Residue lysine 281 participates in L-methionine binding.

Belongs to the AdoMet synthase family. Homotetramer; dimer of dimers. Mg(2+) is required as a cofactor. K(+) serves as cofactor.

The protein localises to the cytoplasm. The enzyme catalyses L-methionine + ATP + H2O = S-adenosyl-L-methionine + phosphate + diphosphate. The protein operates within amino-acid biosynthesis; S-adenosyl-L-methionine biosynthesis; S-adenosyl-L-methionine from L-methionine: step 1/1. In terms of biological role, catalyzes the formation of S-adenosylmethionine (AdoMet) from methionine and ATP. The overall synthetic reaction is composed of two sequential steps, AdoMet formation and the subsequent tripolyphosphate hydrolysis which occurs prior to release of AdoMet from the enzyme. This Acetivibrio thermocellus (strain ATCC 27405 / DSM 1237 / JCM 9322 / NBRC 103400 / NCIMB 10682 / NRRL B-4536 / VPI 7372) (Clostridium thermocellum) protein is S-adenosylmethionine synthase.